The chain runs to 173 residues: Photosystem I assembly protein Ycf3 (173 aa).

TPR repeat units lie at residues 35–68, 72–105, and 113–146; these read AFAYYRDGMSAQADGEYAEALENYQAALELEEDP, SYILYNIGLIHASNGEHEKALEYYHQALELNPRM, and AVIYHYLGTQAEEQQRLEEAEQFFDRAADYWKRA.

Belongs to the Ycf3 family.

The protein resides in the cellular thylakoid membrane. Its function is as follows. Essential for the assembly of the photosystem I (PSI) complex. May act as a chaperone-like factor to guide the assembly of the PSI subunits. The sequence is that of Photosystem I assembly protein Ycf3 from Thermosynechococcus vestitus (strain NIES-2133 / IAM M-273 / BP-1).